The sequence spans 90 residues: Transcriptional repressor SdpR (90 aa).

One can recognise an HTH arsR-type domain in the interval 1 to 87 (MNNVFKAISD…WMLNFINKGD (87 aa)). Positions 39–62 (PSISHHLNILKQAEVISDHRKGQF) form a DNA-binding region, H-T-H motif.

Its subcellular location is the cytoplasm. Its function is as follows. Represses the transcription of the sdpIR operon and of several other operons that probably contribute to delaying commitment to sporulation. This Bacillus subtilis (strain 168) protein is Transcriptional repressor SdpR (sdpR).